The primary structure comprises 160 residues: Nucleotide-binding protein MADE_1020535 (160 aa).

This sequence belongs to the YajQ family.

Functionally, nucleotide-binding protein. This chain is Nucleotide-binding protein MADE_1020535, found in Alteromonas mediterranea (strain DSM 17117 / CIP 110805 / LMG 28347 / Deep ecotype).